A 140-amino-acid chain; its full sequence is Putative pre-16S rRNA nuclease (140 aa).

Belongs to the YqgF nuclease family.

The protein localises to the cytoplasm. In terms of biological role, could be a nuclease involved in processing of the 5'-end of pre-16S rRNA. This is Putative pre-16S rRNA nuclease from Enterococcus faecalis (strain ATCC 700802 / V583).